A 397-amino-acid polypeptide reads, in one-letter code: tRNA(Met) cytidine acetate ligase (397 aa).

ATP is bound by residues 7–20 (VTEYNPFHNGHIYH), glycine 101, asparagine 152, and arginine 177.

The protein belongs to the TmcAL family.

Its subcellular location is the cytoplasm. It catalyses the reaction cytidine(34) in elongator tRNA(Met) + acetate + ATP = N(4)-acetylcytidine(34) in elongator tRNA(Met) + AMP + diphosphate. Catalyzes the formation of N(4)-acetylcytidine (ac(4)C) at the wobble position of elongator tRNA(Met), using acetate and ATP as substrates. First activates an acetate ion to form acetyladenylate (Ac-AMP) and then transfers the acetyl group to tRNA to form ac(4)C34. In Leuconostoc citreum (strain KM20), this protein is tRNA(Met) cytidine acetate ligase.